The chain runs to 717 residues: Eukaryotic translation initiation factor 3 subunit B (717 aa).

The sufficient for interaction with HCR1 and TIF32 stretch occupies residues M1 to M89. The interval M1–W216 is sufficient for interaction with PIC8. The 88-residue stretch at S28–E115 folds into the RRM domain. WD repeat units lie at residues R183–C221, F223–T284, G293–K332, E445–T484, F506–H549, and S564–E609.

It belongs to the eIF-3 subunit B family. As to quaternary structure, component of the eukaryotic translation initiation factor 3 (eIF-3) complex.

The protein localises to the cytoplasm. RNA-binding component of the eukaryotic translation initiation factor 3 (eIF-3) complex, which is involved in protein synthesis of a specialized repertoire of mRNAs and, together with other initiation factors, stimulates binding of mRNA and methionyl-tRNAi to the 40S ribosome. The eIF-3 complex specifically targets and initiates translation of a subset of mRNAs involved in cell proliferation. In Yarrowia lipolytica (strain CLIB 122 / E 150) (Yeast), this protein is Eukaryotic translation initiation factor 3 subunit B.